Reading from the N-terminus, the 146-residue chain is D-aminoacyl-tRNA deacylase (146 aa).

Positions 137–138 (GP) match the Gly-cisPro motif, important for rejection of L-amino acids motif.

This sequence belongs to the DTD family. As to quaternary structure, homodimer.

The protein resides in the cytoplasm. It catalyses the reaction glycyl-tRNA(Ala) + H2O = tRNA(Ala) + glycine + H(+). It carries out the reaction a D-aminoacyl-tRNA + H2O = a tRNA + a D-alpha-amino acid + H(+). Functionally, an aminoacyl-tRNA editing enzyme that deacylates mischarged D-aminoacyl-tRNAs. Also deacylates mischarged glycyl-tRNA(Ala), protecting cells against glycine mischarging by AlaRS. Acts via tRNA-based rather than protein-based catalysis; rejects L-amino acids rather than detecting D-amino acids in the active site. By recycling D-aminoacyl-tRNA to D-amino acids and free tRNA molecules, this enzyme counteracts the toxicity associated with the formation of D-aminoacyl-tRNA entities in vivo and helps enforce protein L-homochirality. This is D-aminoacyl-tRNA deacylase from Deinococcus deserti (strain DSM 17065 / CIP 109153 / LMG 22923 / VCD115).